A 255-amino-acid polypeptide reads, in one-letter code: Homeobox protein DLX-1 (255 aa).

The span at 1-14 shows a compositional bias: polar residues; it reads MTMTTMPESLNSPV. Disordered stretches follow at residues 1 to 38 and 95 to 118; these read MTMT…MSHG and SLAQ…EGGE. A compositionally biased stretch (low complexity) spans 25–36; sequence PPNQQMSPSPMS. Residues 100-112 are compositionally biased toward basic and acidic residues; sequence RLEDPGADSEKST. The segment at residues 128-187 is a DNA-binding region (homeobox); sequence IRKPRTIYSSLQLQALNRRFQQTQYLALPERAELAASLGLTQTQVKIWFQNKRSKFKKLM. The disordered stretch occupies residues 204–233; it reads ALSAGSPPVPPGWNPNSSSGKGSGSSAGSY. Low complexity predominate over residues 217–232; that stretch reads NPNSSSGKGSGSSAGS.

Belongs to the distal-less homeobox family. Interacts with SMAD4 (via homeobox DNA-binding domain). Interacts (via homeobox DNA-binding domain) with POU4F2; this interaction suppresses DLX1-mediated transcriptional activity in postnatal retina and enhances retinal ganglion cell (RGC) differentiation. In terms of tissue distribution, expressed in a restricted region of the developing brain, within the diencephalon and the adjacent telencephalic regions.

The protein localises to the nucleus. Plays a role as a transcriptional activator or repressor. Inhibits several cytokine signaling pathways, such as TGFB1, activin-A/INHBA and BMP4 by interfering with the transcriptional stimulatory activity of transcription factors, such as MSX2, FAST2, SMAD2 and SMAD3 during hematopoietic cell differentiation. Plays a role in terminal differentiation of interneurons, such as amacrine and bipolar cells in the developing retina. Likely to play a regulatory role in the development of the ventral forebrain. May play a role in craniofacial patterning and morphogenesis and may be involved in the early development of diencephalic subdivisions. The polypeptide is Homeobox protein DLX-1 (Dlx1) (Mus musculus (Mouse)).